A 92-amino-acid chain; its full sequence is Small ribosomal subunit protein uS19 (92 aa).

This sequence belongs to the universal ribosomal protein uS19 family.

Protein S19 forms a complex with S13 that binds strongly to the 16S ribosomal RNA. The sequence is that of Small ribosomal subunit protein uS19 from Rhizobium rhizogenes (strain K84 / ATCC BAA-868) (Agrobacterium radiobacter).